We begin with the raw amino-acid sequence, 228 residues long: Prolactin-2A1 (228 aa).

The signal sequence occupies residues 1–29; the sequence is MQLSITHPCCWTLRLLLVSNLLLWENVAL. 2 disulfide bridges follow: Cys87-Cys203 and Cys220-Cys228.

It belongs to the somatotropin/prolactin family. As to expression, expressed specifically in the placenta. Highly expressed in invasive trophoblast cells lining the central placental vessel.

The protein localises to the secreted. The sequence is that of Prolactin-2A1 (Prl2a1) from Rattus norvegicus (Rat).